A 177-amino-acid chain; its full sequence is Ureidoglycolate lyase (177 aa).

It belongs to the ureidoglycolate lyase family. In terms of assembly, homodimer. The cofactor is Ni(2+).

The catalysed reaction is (S)-ureidoglycolate = urea + glyoxylate. The protein operates within nitrogen metabolism; (S)-allantoin degradation. Catalyzes the catabolism of the allantoin degradation intermediate (S)-ureidoglycolate, generating urea and glyoxylate. Involved in the utilization of allantoin as nitrogen source. The sequence is that of Ureidoglycolate lyase from Burkholderia cepacia (Pseudomonas cepacia).